A 473-amino-acid chain; its full sequence is Photosystem II CP43 reaction center protein (473 aa).

The propeptide occupies 1-14 (MKTLYSLRRFYPVE). The residue at position 15 (Thr-15) is an N-acetylthreonine. At Thr-15 the chain carries Phosphothreonine. The next 5 membrane-spanning stretches (helical) occupy residues 69–93 (LFEVAHFVPEKPMYEQGLILLPHLA), 134–155 (LLGPETLEESFPFFGYVWKDRN), 178–200 (KALYFGGVYDTWAPGGGDVRKIT), 255–275 (KPFAWARRALVWSGEAYLSYS), and 291–312 (WFNNTAYPSEFYGPTGPEASQA). Glu-367 contacts [CaMn4O5] cluster. The chain crosses the membrane as a helical span at residues 447–471 (RARAAAAGFEKGIDRDFEPVLSMTP).

Belongs to the PsbB/PsbC family. PsbC subfamily. PSII is composed of 1 copy each of membrane proteins PsbA, PsbB, PsbC, PsbD, PsbE, PsbF, PsbH, PsbI, PsbJ, PsbK, PsbL, PsbM, PsbT, PsbX, PsbY, PsbZ, Psb30/Ycf12, at least 3 peripheral proteins of the oxygen-evolving complex and a large number of cofactors. It forms dimeric complexes. Binds multiple chlorophylls and provides some of the ligands for the Ca-4Mn-5O cluster of the oxygen-evolving complex. It may also provide a ligand for a Cl- that is required for oxygen evolution. PSII binds additional chlorophylls, carotenoids and specific lipids. is required as a cofactor.

It is found in the plastid. Its subcellular location is the chloroplast thylakoid membrane. Its function is as follows. One of the components of the core complex of photosystem II (PSII). It binds chlorophyll and helps catalyze the primary light-induced photochemical processes of PSII. PSII is a light-driven water:plastoquinone oxidoreductase, using light energy to abstract electrons from H(2)O, generating O(2) and a proton gradient subsequently used for ATP formation. This Vitis vinifera (Grape) protein is Photosystem II CP43 reaction center protein.